A 269-amino-acid chain; its full sequence is 3-methyl-2-oxobutanoate hydroxymethyltransferase (269 aa).

2 residues coordinate Mg(2+): Asp-50 and Asp-89. 3-methyl-2-oxobutanoate contacts are provided by residues 50 to 51 (DS), Asp-89, and Lys-119. Glu-121 is a binding site for Mg(2+). Residue Glu-187 is the Proton acceptor of the active site.

Belongs to the PanB family. In terms of assembly, homodecamer; pentamer of dimers. The cofactor is Mg(2+).

Its subcellular location is the cytoplasm. The catalysed reaction is 3-methyl-2-oxobutanoate + (6R)-5,10-methylene-5,6,7,8-tetrahydrofolate + H2O = 2-dehydropantoate + (6S)-5,6,7,8-tetrahydrofolate. Its pathway is cofactor biosynthesis; (R)-pantothenate biosynthesis; (R)-pantoate from 3-methyl-2-oxobutanoate: step 1/2. In terms of biological role, catalyzes the reversible reaction in which hydroxymethyl group from 5,10-methylenetetrahydrofolate is transferred onto alpha-ketoisovalerate to form ketopantoate. This is 3-methyl-2-oxobutanoate hydroxymethyltransferase from Corynebacterium efficiens (strain DSM 44549 / YS-314 / AJ 12310 / JCM 11189 / NBRC 100395).